The sequence spans 146 residues: Protein LDOC1 (146 aa).

This sequence belongs to the LDOC1 family. Interacts with NOD2. As to expression, ubiquitously expressed with high levels in brain ant thyroid and low expression in placenta, liver and leukocytes. Expressed as well in six of the seven human breast cancer cell lines examined.

The protein localises to the nucleus. May have an important role in the development and/or progression of some cancers. This is Protein LDOC1 (LDOC1) from Homo sapiens (Human).